Reading from the N-terminus, the 550-residue chain is CCR4-NOT transcription complex subunit 6-like-A (550 aa).

The tract at residues 1–148 (MPKEKYDPPD…LYQEPDGMRK (148 aa)) is required for interaction with cnot1, cnot3 and cnot7. LRR repeat units lie at residues 52–73 (HLTVLHLSDNNLSRIPPDIAKL), 75–96 (NLVYLDLSSNKLRSLPAELGNV), 98–120 (SLRELLLNNNLLRVLPFELGRLF), and 121–143 (RLQTLGLKGNPLSQDILSLYQEP). Residues 153 to 550 (MLDNLSVHPE…INGVHLPSRR (398 aa)) are nuclease domain. Position 235 (E235) interacts with Mg(2+). Residues E235, E271, H355, and P360 each coordinate substrate. Mg(2+) is bound at residue D405. The active-site Proton donor/acceptor is D405. Substrate is bound by residues N407, N474, and F479.

It belongs to the CCR4/nocturin family. Component of the CCR4-NOT complex. Requires Mg(2+) as cofactor.

The protein resides in the cytoplasm. It localises to the nucleus. It catalyses the reaction Exonucleolytic cleavage of poly(A) to 5'-AMP.. Poly(A) nuclease with 3'-5' RNase activity. Catalytic component of the CCR4-NOT complex which is one of the major cellular mRNA deadenylases and is linked to various cellular processes including bulk mRNA degradation, miRNA-mediated repression, translational repression during translational initiation and general transcription regulation. Additional complex functions may be a consequence of its influence on mRNA expression. This is CCR4-NOT transcription complex subunit 6-like-A (cnot6l-a) from Xenopus laevis (African clawed frog).